Reading from the N-terminus, the 420-residue chain is Transcription termination factor Rho (420 aa).

The 76-residue stretch at 49–124 (DIFGGGVLEI…LKVDQVNDDK (76 aa)) folds into the Rho RNA-BD domain. ATP contacts are provided by residues 170–175 (GKGQRG), 182–187 (KAGKTM), and Arg-213.

Belongs to the Rho family. In terms of assembly, homohexamer. The homohexamer assembles into an open ring structure.

Functionally, facilitates transcription termination by a mechanism that involves Rho binding to the nascent RNA, activation of Rho's RNA-dependent ATPase activity, and release of the mRNA from the DNA template. This is Transcription termination factor Rho from Haemophilus influenzae (strain ATCC 51907 / DSM 11121 / KW20 / Rd).